Reading from the N-terminus, the 252-residue chain is Type III pantothenate kinase (252 aa).

ATP is bound at residue 6 to 13 (DIGNTNTV). 105–108 (GADR) lines the substrate pocket. The Proton acceptor role is filled by Asp-107. Asp-127 contacts K(+). Thr-130 is an ATP binding site. Thr-182 is a binding site for substrate.

Belongs to the type III pantothenate kinase family. As to quaternary structure, homodimer. Requires NH4(+) as cofactor. The cofactor is K(+).

It is found in the cytoplasm. The enzyme catalyses (R)-pantothenate + ATP = (R)-4'-phosphopantothenate + ADP + H(+). It functions in the pathway cofactor biosynthesis; coenzyme A biosynthesis; CoA from (R)-pantothenate: step 1/5. In terms of biological role, catalyzes the phosphorylation of pantothenate (Pan), the first step in CoA biosynthesis. The chain is Type III pantothenate kinase from Salinispora arenicola (strain CNS-205).